We begin with the raw amino-acid sequence, 380 residues long: Putative 8-amino-7-oxononanoate synthase (380 aa).

Residue Arg-18 coordinates substrate. Gly-106–Tyr-107 lines the pyridoxal 5'-phosphate pocket. His-131 serves as a coordination point for substrate. Pyridoxal 5'-phosphate is bound by residues Ser-179, Asp-205–His-208, and Thr-236–Lys-239. Residue Lys-239 is modified to N6-(pyridoxal phosphate)lysine. Thr-352 is a substrate binding site.

It belongs to the class-II pyridoxal-phosphate-dependent aminotransferase family. BioF subfamily. As to quaternary structure, homodimer. Pyridoxal 5'-phosphate is required as a cofactor.

It catalyses the reaction 6-carboxyhexanoyl-[ACP] + L-alanine + H(+) = (8S)-8-amino-7-oxononanoate + holo-[ACP] + CO2. It functions in the pathway cofactor biosynthesis; biotin biosynthesis. Functionally, catalyzes the decarboxylative condensation of pimeloyl-[acyl-carrier protein] and L-alanine to produce 8-amino-7-oxononanoate (AON), [acyl-carrier protein], and carbon dioxide. This is Putative 8-amino-7-oxononanoate synthase (bioF) from Neisseria meningitidis serogroup C (strain 053442).